The chain runs to 278 residues: Rhamnulose-1-phosphate aldolase (278 aa).

Glu-116 is an active-site residue. Residues His-139, His-141, and His-210 each contribute to the Zn(2+) site.

Belongs to the aldolase class II family. RhaD subfamily. It depends on Zn(2+) as a cofactor.

The protein localises to the cytoplasm. It catalyses the reaction L-rhamnulose 1-phosphate = (S)-lactaldehyde + dihydroxyacetone phosphate. The protein operates within carbohydrate degradation; L-rhamnose degradation; glycerone phosphate from L-rhamnose: step 3/3. In terms of biological role, catalyzes the reversible cleavage of L-rhamnulose-1-phosphate to dihydroxyacetone phosphate (DHAP) and L-lactaldehyde. This chain is Rhamnulose-1-phosphate aldolase, found in Listeria welshimeri serovar 6b (strain ATCC 35897 / DSM 20650 / CCUG 15529 / CIP 8149 / NCTC 11857 / SLCC 5334 / V8).